Here is a 288-residue protein sequence, read N- to C-terminus: ATP synthase gamma chain (288 aa).

The protein belongs to the ATPase gamma chain family. As to quaternary structure, F-type ATPases have 2 components, CF(1) - the catalytic core - and CF(0) - the membrane proton channel. CF(1) has five subunits: alpha(3), beta(3), gamma(1), delta(1), epsilon(1). CF(0) has three main subunits: a, b and c.

It localises to the cell membrane. In terms of biological role, produces ATP from ADP in the presence of a proton gradient across the membrane. The gamma chain is believed to be important in regulating ATPase activity and the flow of protons through the CF(0) complex. The sequence is that of ATP synthase gamma chain from Bacillus pumilus (strain SAFR-032).